We begin with the raw amino-acid sequence, 213 residues long: Protein DMP3 (213 aa).

Residues 1-27 are disordered; the sequence is MSSPSSLTQRNPTSSQEQSESVPQLRR. The next 4 helical transmembrane spans lie at 45–65, 74–94, 136–156, and 176–196; these read LANL…PVFT, TQVL…LSSF, IRII…AVAL, and VLDI…LVFP.

The protein belongs to the plant DMP1 protein family. As to expression, expressed in leaves, siliques and roots (e.g. root hairs).

Its subcellular location is the endoplasmic reticulum membrane. Involved in membrane remodeling. The protein is Protein DMP3 of Arabidopsis thaliana (Mouse-ear cress).